The primary structure comprises 315 residues: Malate dehydrogenase (315 aa).

NAD(+) contacts are provided by residues 10–15 and aspartate 34; that span reads GSGFTG. Substrate is bound by residues arginine 85 and arginine 91. NAD(+) contacts are provided by residues asparagine 98 and 121 to 123; that span reads LTN. Residues asparagine 123 and arginine 154 each coordinate substrate. Histidine 178 (proton acceptor) is an active-site residue.

This sequence belongs to the LDH/MDH superfamily. MDH type 3 family.

The enzyme catalyses (S)-malate + NAD(+) = oxaloacetate + NADH + H(+). In terms of biological role, catalyzes the reversible oxidation of malate to oxaloacetate. In Symbiobacterium thermophilum (strain DSM 24528 / JCM 14929 / IAM 14863 / T), this protein is Malate dehydrogenase.